We begin with the raw amino-acid sequence, 182 residues long: Rhodanese-like domain-containing protein 15, chloroplastic (182 aa).

A chloroplast-targeting transit peptide spans 1-65 (METTAFNTTS…TTSRGNVAAE (65 aa)). Residues 82–182 (AQAGYRYLDV…WTENELPVEE (101 aa)) enclose the Rhodanese domain. Cys142 (cysteine persulfide intermediate) is an active-site residue.

The protein resides in the plastid. Its subcellular location is the chloroplast. It localises to the thylakoid. This is Rhodanese-like domain-containing protein 15, chloroplastic (STR15) from Arabidopsis thaliana (Mouse-ear cress).